The chain runs to 515 residues: Arabinose import ATP-binding protein AraG 2 (515 aa).

The disordered stretch occupies residues 1 to 22 (MTMQTMTAASGHDAEAGTPPDG). ABC transporter domains follow at residues 25-260 (LALD…MVGR) and 260-511 (RSIE…LIKL). 57-64 (GENGAGKS) lines the ATP pocket.

Belongs to the ABC transporter superfamily. Arabinose importer (TC 3.A.1.2.2) family. In terms of assembly, the complex is composed of two ATP-binding proteins (AraG), two transmembrane proteins (AraH) and a solute-binding protein (AraF).

It is found in the cell inner membrane. The catalysed reaction is L-arabinose(out) + ATP + H2O = L-arabinose(in) + ADP + phosphate + H(+). Functionally, part of the ABC transporter complex AraFGH involved in arabinose import. Responsible for energy coupling to the transport system. The sequence is that of Arabinose import ATP-binding protein AraG 2 from Burkholderia cenocepacia (strain HI2424).